The chain runs to 278 residues: Probable F-box protein At1g14315 (278 aa).

The F-box domain maps to 1 to 43 (MQLLPHDTVEDILERVPVKSLLRFKSACKQWKLTIESQYFQAK).

This is Probable F-box protein At1g14315 from Arabidopsis thaliana (Mouse-ear cress).